We begin with the raw amino-acid sequence, 508 residues long: Lysine--tRNA ligase (508 aa).

Residues E418 and E425 each coordinate Mg(2+).

The protein belongs to the class-II aminoacyl-tRNA synthetase family. As to quaternary structure, homodimer. Requires Mg(2+) as cofactor.

It is found in the cytoplasm. It catalyses the reaction tRNA(Lys) + L-lysine + ATP = L-lysyl-tRNA(Lys) + AMP + diphosphate. In Burkholderia pseudomallei (strain K96243), this protein is Lysine--tRNA ligase.